The sequence spans 425 residues: Serine--tRNA ligase (425 aa).

Residue 231-233 participates in L-serine binding; the sequence is TAE. 262–264 serves as a coordination point for ATP; it reads RSE. Residue Glu-285 participates in L-serine binding. ATP is bound at residue 349–352; that stretch reads EISS. Residue Ser-385 participates in L-serine binding.

It belongs to the class-II aminoacyl-tRNA synthetase family. Type-1 seryl-tRNA synthetase subfamily. As to quaternary structure, homodimer. The tRNA molecule binds across the dimer.

The protein resides in the cytoplasm. The catalysed reaction is tRNA(Ser) + L-serine + ATP = L-seryl-tRNA(Ser) + AMP + diphosphate + H(+). It catalyses the reaction tRNA(Sec) + L-serine + ATP = L-seryl-tRNA(Sec) + AMP + diphosphate + H(+). Its pathway is aminoacyl-tRNA biosynthesis; selenocysteinyl-tRNA(Sec) biosynthesis; L-seryl-tRNA(Sec) from L-serine and tRNA(Sec): step 1/1. Catalyzes the attachment of serine to tRNA(Ser). Is also able to aminoacylate tRNA(Sec) with serine, to form the misacylated tRNA L-seryl-tRNA(Sec), which will be further converted into selenocysteinyl-tRNA(Sec). This chain is Serine--tRNA ligase, found in Bartonella tribocorum (strain CIP 105476 / IBS 506).